A 598-amino-acid chain; its full sequence is Beta-myrcene/(E)-beta-ocimene synthase 2, chloroplastic (598 aa).

The transit peptide at 1-30 directs the protein to the chloroplast; the sequence is MATLCIGSAPIYQNACIHNFRLQRPRRFIS. 5 residues coordinate (2E)-geranyl diphosphate: arginine 307, aspartate 344, aspartate 348, arginine 486, and asparagine 489. Residues aspartate 344 and aspartate 348 each coordinate Mg(2+). Residues 344–348 carry the DDXXD motif motif; it reads DDIYD. Positions 489, 493, and 497 each coordinate Mg(2+).

Belongs to the terpene synthase family. Tpsb subfamily. It depends on Mg(2+) as a cofactor. Mn(2+) serves as cofactor. As to expression, expressed exclusively in mature flowers, but not in inmmature buds.

It localises to the plastid. Its subcellular location is the chloroplast. The enzyme catalyses (2E)-geranyl diphosphate = beta-myrcene + diphosphate. The protein operates within secondary metabolite biosynthesis; terpenoid biosynthesis. Involved in monoterpene (C10) biosynthesis. The major products are alpha- and beta-pinene, sabinene, beta-myrcene, (E)-beta-ocimene and limonene. In Arabidopsis thaliana (Mouse-ear cress), this protein is Beta-myrcene/(E)-beta-ocimene synthase 2, chloroplastic (TPS24).